Here is a 361-residue protein sequence, read N- to C-terminus: Phospho-N-acetylmuramoyl-pentapeptide-transferase (361 aa).

The next 10 helical transmembrane spans lie at 28 to 48 (LAIIITLSLSFITGPILIKFL), 74 to 94 (TMGGIMIILSSCLSTLLLADL), 99 to 119 (IWITLFGFISFGIIGFMDDYA), 133 to 153 (SKLLLQGIISLIICILLEYLD), 168 to 188 (LSLDLGYFYIVFAIFVIVGSS), 203 to 223 (VPIAFTAGSFALISYLVGNLI), 236 to 256 (TGELTVLCAGLVGSCLGFLWF), 263 to 283 (VFMGDTGSLSLGGVLGIISVI), 288 to 308 (IVLAIVGGLFVIETASVILQV), and 338 to 358 (KVVIRFWIISVIFALIGLSSL).

The protein belongs to the glycosyltransferase 4 family. MraY subfamily. Requires Mg(2+) as cofactor.

The protein localises to the cell inner membrane. It catalyses the reaction UDP-N-acetyl-alpha-D-muramoyl-L-alanyl-gamma-D-glutamyl-meso-2,6-diaminopimeloyl-D-alanyl-D-alanine + di-trans,octa-cis-undecaprenyl phosphate = di-trans,octa-cis-undecaprenyl diphospho-N-acetyl-alpha-D-muramoyl-L-alanyl-D-glutamyl-meso-2,6-diaminopimeloyl-D-alanyl-D-alanine + UMP. It participates in cell wall biogenesis; peptidoglycan biosynthesis. Its function is as follows. Catalyzes the initial step of the lipid cycle reactions in the biosynthesis of the cell wall peptidoglycan: transfers peptidoglycan precursor phospho-MurNAc-pentapeptide from UDP-MurNAc-pentapeptide onto the lipid carrier undecaprenyl phosphate, yielding undecaprenyl-pyrophosphoryl-MurNAc-pentapeptide, known as lipid I. The protein is Phospho-N-acetylmuramoyl-pentapeptide-transferase of Rickettsia felis (strain ATCC VR-1525 / URRWXCal2) (Rickettsia azadi).